We begin with the raw amino-acid sequence, 241 residues long: Chalcone--flavanone isomerase C (241 aa).

Substrate contacts are provided by Thr-50, Asn-115, and Ser-192.

Belongs to the chalcone isomerase family.

It catalyses the reaction a chalcone = a flavanone.. It functions in the pathway secondary metabolite biosynthesis; flavonoid biosynthesis. Functionally, catalyzes the intramolecular cyclization of bicyclic chalcones into tricyclic (S)-flavanones. Responsible for the isomerization of 4,2',4',6'-tetrahydroxychalcone (also termed chalcone) into naringenin. This chain is Chalcone--flavanone isomerase C (CHI3), found in Petunia hybrida (Petunia).